A 276-amino-acid polypeptide reads, in one-letter code: Large ribosomal subunit protein uL2 (276 aa).

2 disordered regions span residues 14-58 (RNAS…GGGH) and 219-276 (PITR…KNRK). The segment covering 16-27 (ASVSDFSELTRS) has biased composition (polar residues). Basic residues predominate over residues 255–276 (RRPKKASNKMIVRRRPSGKNRK).

It belongs to the universal ribosomal protein uL2 family. In terms of assembly, part of the 50S ribosomal subunit. Forms a bridge to the 30S subunit in the 70S ribosome.

Its function is as follows. One of the primary rRNA binding proteins. Required for association of the 30S and 50S subunits to form the 70S ribosome, for tRNA binding and peptide bond formation. It has been suggested to have peptidyltransferase activity; this is somewhat controversial. Makes several contacts with the 16S rRNA in the 70S ribosome. The sequence is that of Large ribosomal subunit protein uL2 from Bifidobacterium longum (strain DJO10A).